A 195-amino-acid polypeptide reads, in one-letter code: Imidazoleglycerol-phosphate dehydratase (195 aa).

This sequence belongs to the imidazoleglycerol-phosphate dehydratase family.

It localises to the cytoplasm. It catalyses the reaction D-erythro-1-(imidazol-4-yl)glycerol 3-phosphate = 3-(imidazol-4-yl)-2-oxopropyl phosphate + H2O. Its pathway is amino-acid biosynthesis; L-histidine biosynthesis; L-histidine from 5-phospho-alpha-D-ribose 1-diphosphate: step 6/9. This Beijerinckia indica subsp. indica (strain ATCC 9039 / DSM 1715 / NCIMB 8712) protein is Imidazoleglycerol-phosphate dehydratase.